We begin with the raw amino-acid sequence, 559 residues long: CTP synthase (559 aa).

Residues 1–283 (MSTSRTTTNN…DTFLIRRLDL (283 aa)) form an amidoligase domain region. Residue S25 coordinates CTP. S25 is a UTP binding site. ATP is bound by residues 26–31 (SLGKGL) and D83. 2 residues coordinate Mg(2+): D83 and E157. CTP contacts are provided by residues 164–166 (DIE), 204–209 (KTKPTQ), and K240. UTP-binding positions include 204–209 (KTKPTQ) and K240. The region spanning 308–557 (TVGIVGKYVD…VAAALAAAVT (250 aa)) is the Glutamine amidotransferase type-1 domain. G371 contacts L-glutamine. The Nucleophile; for glutamine hydrolysis role is filled by C398. L-glutamine-binding positions include 399-402 (LGLQ), E421, and R482. Residues H530 and E532 contribute to the active site.

The protein belongs to the CTP synthase family. Homotetramer.

It carries out the reaction UTP + L-glutamine + ATP + H2O = CTP + L-glutamate + ADP + phosphate + 2 H(+). It catalyses the reaction L-glutamine + H2O = L-glutamate + NH4(+). The enzyme catalyses UTP + NH4(+) + ATP = CTP + ADP + phosphate + 2 H(+). Its pathway is pyrimidine metabolism; CTP biosynthesis via de novo pathway; CTP from UDP: step 2/2. Allosterically activated by GTP, when glutamine is the substrate; GTP has no effect on the reaction when ammonia is the substrate. The allosteric effector GTP functions by stabilizing the protein conformation that binds the tetrahedral intermediate(s) formed during glutamine hydrolysis. Inhibited by the product CTP, via allosteric rather than competitive inhibition. Its function is as follows. Catalyzes the ATP-dependent amination of UTP to CTP with either L-glutamine or ammonia as the source of nitrogen. Regulates intracellular CTP levels through interactions with the four ribonucleotide triphosphates. This is CTP synthase from Corynebacterium efficiens (strain DSM 44549 / YS-314 / AJ 12310 / JCM 11189 / NBRC 100395).